The chain runs to 385 residues: Probable tRNA sulfurtransferase (385 aa).

Positions 57–160 (DGVIERVKKV…RGNAYVFTDK (104 aa)) constitute a THUMP domain. Residues 180-181 (ML), 205-206 (YY), Arg262, Gly284, and Gln293 each bind ATP.

The protein belongs to the ThiI family.

It localises to the cytoplasm. It catalyses the reaction [ThiI sulfur-carrier protein]-S-sulfanyl-L-cysteine + a uridine in tRNA + 2 reduced [2Fe-2S]-[ferredoxin] + ATP + H(+) = [ThiI sulfur-carrier protein]-L-cysteine + a 4-thiouridine in tRNA + 2 oxidized [2Fe-2S]-[ferredoxin] + AMP + diphosphate. The enzyme catalyses [ThiS sulfur-carrier protein]-C-terminal Gly-Gly-AMP + S-sulfanyl-L-cysteinyl-[cysteine desulfurase] + AH2 = [ThiS sulfur-carrier protein]-C-terminal-Gly-aminoethanethioate + L-cysteinyl-[cysteine desulfurase] + A + AMP + 2 H(+). The protein operates within cofactor biosynthesis; thiamine diphosphate biosynthesis. Functionally, catalyzes the ATP-dependent transfer of a sulfur to tRNA to produce 4-thiouridine in position 8 of tRNAs, which functions as a near-UV photosensor. Also catalyzes the transfer of sulfur to the sulfur carrier protein ThiS, forming ThiS-thiocarboxylate. This is a step in the synthesis of thiazole, in the thiamine biosynthesis pathway. The sulfur is donated as persulfide by IscS. The polypeptide is Probable tRNA sulfurtransferase (Clostridium perfringens (strain SM101 / Type A)).